The chain runs to 1174 residues: Male determiner protein Mdmd(III) (1174 aa).

Basic and acidic residues predominate over residues 1–15; the sequence is MNATDAESRKPENKP. Disordered regions lie at residues 1 to 51, 80 to 109, and 136 to 259; these read MNAT…SGQR, KDGS…HPVE, and KQLS…LRRS. Residues 16–35 are compositionally biased toward low complexity; it reads SSESSSSGSTSGSSDGEVSS. The segment covering 36-47 has biased composition (polar residues); that stretch reads KTYFKNNKSKVL. Residues 80–92 show a composition bias toward basic and acidic residues; it reads KDGSNEMLPKEDS. Residues 93–102 show a composition bias toward polar residues; it reads INTNHNYTTD. The span at 138–153 shows a compositional bias: low complexity; the sequence is LSAYRSRSRSTRLSYS. A compositionally biased stretch (basic residues) spans 167-180; the sequence is SRYKKSVLRNRRTS. Residues 183–200 show a composition bias toward basic and acidic residues; sequence HGRDSSTTKRSVSRDKDN. Basic residues predominate over residues 201 to 223; the sequence is RLRRRIGSSRSHTRSHSRFRRSE. Positions 235–259 are enriched in basic and acidic residues; it reads RSQERRHERRRSMSSDYERIALRRS. Residues 348 to 531 form the MIF4G domain; that stretch reads KKYIHGYINK…KVLFQVRRDG (184 aa). Positions 641–757 constitute an MI domain; that stretch reads ALRRTIYLTL…SWDVLDCIKL (117 aa). Positions 840–857 are enriched in low complexity; it reads SAPSSSSSSSLSSELSAP. Disordered regions lie at residues 840-1045 and 1096-1133; these read SAPS…SRTK and KDNY…NHSR. The span at 869 to 909 shows a compositional bias: basic residues; sequence KKKHKGKNKKMTKKKNPSKKKEKTKKFVGKNKIAAKNKTIK. Residues 910–924 show a composition bias toward basic and acidic residues; that stretch reads RRTDKDNSSSKDNFL. Residues 926 to 957 show a composition bias toward low complexity; sequence SESSSNESISLDSLSSELFAPSSYSSSESSND. The segment covering 963–1001 has biased composition (basic residues); that stretch reads KHKGKNKKMTKKKNPSNKKEKTKKKLSKNKKAPNKNTKK. Over residues 1010 to 1020 the composition is skewed to low complexity; the sequence is SSESSISESKS. Over residues 1034-1045 the composition is skewed to basic residues; the sequence is RKKRVTSKSRTK. Over residues 1103-1118 the composition is skewed to basic and acidic residues; the sequence is QNHEISQRHDSEIKRR. The span at 1119 to 1130 shows a compositional bias: basic residues; that stretch reads REERKKRHHEKN.

It belongs to the CWC22 family. Component of the spliceosome C complex.

The protein localises to the nucleus speckle. In terms of biological role, male determiner protein (M-factor) that controls male somatic sexual differentiation. Acts as a dominant factor that regulates the mRNA splicing of transformer (tra) and doublesex (dsx) transcripts and promotes expression of male splice forms of tra and dsx. Probably acts as a component of the spliceosome C complex required for mRNA splicing factor and exon-junction complex (EJC) assembly. Hinders eIF4AIII from non-specifically binding RNA and escorts it to the splicing machinery to promote EJC assembly on mature mRNAs. The chain is Male determiner protein Mdmd(III) from Musca domestica (House fly).